The following is a 419-amino-acid chain: CCA-adding enzyme (419 aa).

Gly8 and Arg11 together coordinate ATP. The CTP site is built by Gly8 and Arg11. Residues Asp21 and Asp23 each contribute to the Mg(2+) site. The ATP site is built by Arg91, Arg137, and Arg140. Residues Arg91, Arg137, and Arg140 each coordinate CTP.

The protein belongs to the tRNA nucleotidyltransferase/poly(A) polymerase family. Bacterial CCA-adding enzyme type 2 subfamily. The cofactor is Mg(2+).

It catalyses the reaction a tRNA precursor + 2 CTP + ATP = a tRNA with a 3' CCA end + 3 diphosphate. The catalysed reaction is a tRNA with a 3' CCA end + 2 CTP + ATP = a tRNA with a 3' CCACCA end + 3 diphosphate. In terms of biological role, catalyzes the addition and repair of the essential 3'-terminal CCA sequence in tRNAs without using a nucleic acid template. Adds these three nucleotides in the order of C, C, and A to the tRNA nucleotide-73, using CTP and ATP as substrates and producing inorganic pyrophosphate. tRNA 3'-terminal CCA addition is required both for tRNA processing and repair. Also involved in tRNA surveillance by mediating tandem CCA addition to generate a CCACCA at the 3' terminus of unstable tRNAs. While stable tRNAs receive only 3'-terminal CCA, unstable tRNAs are marked with CCACCA and rapidly degraded. The sequence is that of CCA-adding enzyme from Buchnera aphidicola subsp. Baizongia pistaciae (strain Bp).